The sequence spans 591 residues: Ferric-chelate reductase 1 (591 aa).

Residues 6-26 (FTVSAFILLLHVSFVANYPSG) form a helical membrane-spanning segment. The Reelin domain maps to 13 to 179 (LLLHVSFVAN…FTTPEATIAP (167 aa)). N-linked (GlcNAc...) asparagine glycans are attached at residues asparagine 50, asparagine 85, asparagine 308, asparagine 321, and asparagine 353. Residues 216–331 (ERACVLLSFT…ASYYIFVADG (116 aa)) enclose the DOMON domain. A Cytochrome b561 domain is found at 335–533 (DGRIHKHSQQ…VGTEIILEIH (199 aa)). A helical transmembrane segment spans residues 372 to 392 (VHGALMFVAWMTTVSVGVLIA). The heme b site is built by histidine 373 and histidine 413. A run of 2 helical transmembrane segments spans residues 416-436 (LMLT…IYRG) and 445-465 (HPYL…LAAF). 2 residues coordinate heme b: histidine 445 and histidine 481. The next 3 helical transmembrane spans lie at 490–510 (IIAV…LPGP), 514–534 (YAMI…EIHA), and 568–588 (VVLA…LSAI).

It belongs to the FRRS1 family. Heme b is required as a cofactor.

It is found in the membrane. Its function is as follows. Ferric-chelate reductases reduce Fe(3+) to Fe(2+) before its transport from the endosome to the cytoplasm. The sequence is that of Ferric-chelate reductase 1 (FRRS1) from Bos taurus (Bovine).